The primary structure comprises 61 residues: Small ribosomal subunit protein uS14 (61 aa).

Zn(2+) is bound by residues cysteine 24, cysteine 27, cysteine 40, and cysteine 43.

The protein belongs to the universal ribosomal protein uS14 family. Zinc-binding uS14 subfamily. Part of the 30S ribosomal subunit. Contacts proteins S3 and S10. Requires Zn(2+) as cofactor.

In terms of biological role, binds 16S rRNA, required for the assembly of 30S particles and may also be responsible for determining the conformation of the 16S rRNA at the A site. The sequence is that of Small ribosomal subunit protein uS14 from Thermobifida fusca (strain YX).